The primary structure comprises 196 residues: DnaA initiator-associating protein DiaA (196 aa).

In terms of domain architecture, SIS spans 34 to 196 (LVQSLLNGNK…DNTLFPHQDD (163 aa)).

This sequence belongs to the SIS family. DiaA subfamily. As to quaternary structure, homotetramer; dimer of dimers.

Its function is as follows. Required for the timely initiation of chromosomal replication via direct interactions with the DnaA initiator protein. This Yersinia pseudotuberculosis serotype O:1b (strain IP 31758) protein is DnaA initiator-associating protein DiaA.